Reading from the N-terminus, the 446-residue chain is tRNA modification GTPase MnmE (446 aa).

Residues R22, E80, and K119 each coordinate (6S)-5-formyl-5,6,7,8-tetrahydrofolate. The region spanning 215 to 370 (GLSLVIAGRP…LKKVIKQVVG (156 aa)) is the TrmE-type G domain. Residue N225 participates in K(+) binding. Residues 225–230 (NAGKST), 244–250 (TEIAGTT), and 269–272 (DTAG) each bind GTP. A Mg(2+)-binding site is contributed by S229. Residues T244, I246, and T249 each contribute to the K(+) site. T250 lines the Mg(2+) pocket. K446 contacts (6S)-5-formyl-5,6,7,8-tetrahydrofolate.

The protein belongs to the TRAFAC class TrmE-Era-EngA-EngB-Septin-like GTPase superfamily. TrmE GTPase family. As to quaternary structure, homodimer. Heterotetramer of two MnmE and two MnmG subunits. K(+) is required as a cofactor.

It localises to the cytoplasm. In terms of biological role, exhibits a very high intrinsic GTPase hydrolysis rate. Involved in the addition of a carboxymethylaminomethyl (cmnm) group at the wobble position (U34) of certain tRNAs, forming tRNA-cmnm(5)s(2)U34. The protein is tRNA modification GTPase MnmE of Legionella pneumophila subsp. pneumophila (strain Philadelphia 1 / ATCC 33152 / DSM 7513).